The sequence spans 529 residues: Bifunctional purine biosynthesis protein PurH (529 aa).

Residues 2–149 (TNLVPVGRAL…KNHRFVNVVT (148 aa)) enclose the MGS-like domain.

Belongs to the PurH family.

It carries out the reaction (6R)-10-formyltetrahydrofolate + 5-amino-1-(5-phospho-beta-D-ribosyl)imidazole-4-carboxamide = 5-formamido-1-(5-phospho-D-ribosyl)imidazole-4-carboxamide + (6S)-5,6,7,8-tetrahydrofolate. The catalysed reaction is IMP + H2O = 5-formamido-1-(5-phospho-D-ribosyl)imidazole-4-carboxamide. It functions in the pathway purine metabolism; IMP biosynthesis via de novo pathway; 5-formamido-1-(5-phospho-D-ribosyl)imidazole-4-carboxamide from 5-amino-1-(5-phospho-D-ribosyl)imidazole-4-carboxamide (10-formyl THF route): step 1/1. Its pathway is purine metabolism; IMP biosynthesis via de novo pathway; IMP from 5-formamido-1-(5-phospho-D-ribosyl)imidazole-4-carboxamide: step 1/1. The sequence is that of Bifunctional purine biosynthesis protein PurH from Cereibacter sphaeroides (strain ATCC 17029 / ATH 2.4.9) (Rhodobacter sphaeroides).